A 227-amino-acid polypeptide reads, in one-letter code: Orotidine 5'-phosphate decarboxylase (227 aa).

Substrate is bound by residues Asp-8, Lys-30, 57 to 66 (DLKFHDIPNT), Thr-116, Arg-177, Gln-186, Gly-206, and Arg-207. The active-site Proton donor is Lys-59.

Belongs to the OMP decarboxylase family. Type 1 subfamily. In terms of assembly, homodimer.

The catalysed reaction is orotidine 5'-phosphate + H(+) = UMP + CO2. It participates in pyrimidine metabolism; UMP biosynthesis via de novo pathway; UMP from orotate: step 2/2. Catalyzes the decarboxylation of orotidine 5'-monophosphate (OMP) to uridine 5'-monophosphate (UMP). The protein is Orotidine 5'-phosphate decarboxylase of Acinetobacter baumannii (strain AB307-0294).